The chain runs to 455 residues: NADH-quinone oxidoreductase subunit N (455 aa).

The next 11 membrane-spanning stretches (helical) occupy residues 25–45, 61–81, 99–119, 149–169, 193–213, 257–277, 285–305, 312–332, 355–375, 391–411, and 432–452; these read AIVP…ISEY, FSVA…ALSH, VFLL…MFFL, FLMG…IYGA, IGIV…PFHF, IQII…IMAL, MFAF…LLTS, LYYA…VMYV, AGIL…SGFF, IVVF…FKII, and IVAV…NVVL.

The protein belongs to the complex I subunit 2 family. NDH-1 is composed of 14 different subunits. Subunits NuoA, H, J, K, L, M, N constitute the membrane sector of the complex.

It is found in the cell inner membrane. The catalysed reaction is a quinone + NADH + 5 H(+)(in) = a quinol + NAD(+) + 4 H(+)(out). NDH-1 shuttles electrons from NADH, via FMN and iron-sulfur (Fe-S) centers, to quinones in the respiratory chain. The immediate electron acceptor for the enzyme in this species is believed to be a menaquinone. Couples the redox reaction to proton translocation (for every two electrons transferred, four hydrogen ions are translocated across the cytoplasmic membrane), and thus conserves the redox energy in a proton gradient. The sequence is that of NADH-quinone oxidoreductase subunit N from Flavobacterium psychrophilum (strain ATCC 49511 / DSM 21280 / CIP 103535 / JIP02/86).